A 477-amino-acid chain; its full sequence is Histidine permease HisP (477 aa).

Helical transmembrane passes span 16–36 (ITMI…SGAT), 40–60 (AGPW…YFVM), 86–106 (PAFG…TIAV), 126–146 (IFSG…VGAF), 156–176 (IKVI…FGVL), 192–212 (HGFV…GFSF), 238–258 (SIFW…AAII), 284–304 (IGFA…VISS), 337–359 (IPFY…GIFG), 364–386 (LFLI…VSHI), 408–428 (WFPF…INLD), and 437–457 (WGEG…YFGY).

It belongs to the amino acid-polyamine-organocation (APC) superfamily. Amino acid transporter (AAT) (TC 2.A.3.1) family.

It localises to the cell membrane. Involved in histidine uptake. Has low affinity for arginine and lysine. Plays no significant role in the excretion of accumulated histidine. This Lactococcus lactis subsp. cremoris (strain MG1363) protein is Histidine permease HisP.